Here is a 239-residue protein sequence, read N- to C-terminus: Ribosomal RNA small subunit methyltransferase G (239 aa).

S-adenosyl-L-methionine is bound by residues glycine 78, phenylalanine 83, alanine 129–glutamate 130, and arginine 148.

Belongs to the methyltransferase superfamily. RNA methyltransferase RsmG family.

It is found in the cytoplasm. Its function is as follows. Specifically methylates the N7 position of a guanine in 16S rRNA. This is Ribosomal RNA small subunit methyltransferase G from Clostridium perfringens (strain 13 / Type A).